A 534-amino-acid polypeptide reads, in one-letter code: Probable glycine dehydrogenase (decarboxylating) subunit 2 (534 aa).

At lysine 273 the chain carries N6-(pyridoxal phosphate)lysine.

It belongs to the GcvP family. C-terminal subunit subfamily. In terms of assembly, the glycine cleavage system is composed of four proteins: P, T, L and H. In this organism, the P 'protein' is a heterodimer of two subunits. Pyridoxal 5'-phosphate is required as a cofactor.

It carries out the reaction N(6)-[(R)-lipoyl]-L-lysyl-[glycine-cleavage complex H protein] + glycine + H(+) = N(6)-[(R)-S(8)-aminomethyldihydrolipoyl]-L-lysyl-[glycine-cleavage complex H protein] + CO2. Its function is as follows. The glycine cleavage system catalyzes the degradation of glycine. The P protein binds the alpha-amino group of glycine through its pyridoxal phosphate cofactor; CO(2) is released and the remaining methylamine moiety is then transferred to the lipoamide cofactor of the H protein. This Bacillus cereus (strain ATCC 14579 / DSM 31 / CCUG 7414 / JCM 2152 / NBRC 15305 / NCIMB 9373 / NCTC 2599 / NRRL B-3711) protein is Probable glycine dehydrogenase (decarboxylating) subunit 2.